A 157-amino-acid chain; its full sequence is Protein FAM219A (157 aa).

N-acetylmethionine is present on M1. Residues 1-103 (MMEEIDRFQD…SRYSSSGYSS (103 aa)) form a disordered region. Positions 17 to 33 (SDRDCDAREEKQRELAR) are enriched in basic and acidic residues. Residues 38–52 (KNGSMGSPVNQQPKK) are compositionally biased toward polar residues. Residues S44 and S74 each carry the phosphoserine modification. A Phosphothreonine modification is found at T85. Residues S87 and S94 each carry the phosphoserine modification. Positions 94 to 103 (SRYSSSGYSS) are enriched in low complexity.

The protein belongs to the FAM219 family.

In Mus musculus (Mouse), this protein is Protein FAM219A (Fam219a).